The sequence spans 261 residues: MAQENKQNSRTAEHLTFKLDQFEGPLDLLLHLIKQNEMDIYDIQVAEITSQYIDYLHQMQDLRLDIAGEYLVIAATLLNIKSKMLLPVEQEQQVEEDYVDPREDLVQQLVSHQLYQEVAAKFHVMEKQRMELFSREQAVNEDVTYEVSEGTTIDLLQKAFAKLMARKKVKKIKKIKRKIIPERYTIKEEIENIEHTLKMHKGTMNFTDLFDFDGEVEVEKVVTSFLALLELVRVGRVSASQEENNGPILMTYEGKAEEDAI.

The protein belongs to the ScpA family. In terms of assembly, component of a cohesin-like complex composed of ScpA, ScpB and the Smc homodimer, in which ScpA and ScpB bind to the head domain of Smc. The presence of the three proteins is required for the association of the complex with DNA.

The protein localises to the cytoplasm. Its function is as follows. Participates in chromosomal partition during cell division. May act via the formation of a condensin-like complex containing Smc and ScpB that pull DNA away from mid-cell into both cell halves. The chain is Segregation and condensation protein A from Ligilactobacillus salivarius (strain UCC118) (Lactobacillus salivarius).